The chain runs to 471 residues: D-hydantoinase (471 aa).

Zn(2+) contacts are provided by His-58, His-60, and Lys-150. Lys-150 bears the N6-carboxylysine mark. Tyr-155 contacts substrate. 2 residues coordinate Zn(2+): His-183 and His-239. Substrate is bound at residue Ser-288. A Zn(2+)-binding site is contributed by Asp-315. Position 337 (Asn-337) interacts with substrate.

It belongs to the metallo-dependent hydrolases superfamily. Hydantoinase/dihydropyrimidinase family. As to quaternary structure, homotetramer. Zn(2+) is required as a cofactor. Requires Ni(2+) as cofactor. It depends on Co(2+) as a cofactor. The cofactor is Mn(2+). Post-translationally, carboxylation allows a single lysine to coordinate two zinc ions.

Completely inhibited by p-chloromercuribenzoate and partially inhibited by metal chelating agents. Its function is as follows. Catalyzes the stereospecific hydrolysis of the cyclic amide bond of D-hydantoin. Has no activity on dihydropyrimidines. This is D-hydantoinase from Geobacillus stearothermophilus (Bacillus stearothermophilus).